A 372-amino-acid chain; its full sequence is uncharacterized protein (372 aa).

Positions 1-33 (MVRRALRLAAGTASLAAGTWLLRALHGTPAALG) are cleaved as a signal peptide.

This sequence to K.pneumoniae RomA.

This is an uncharacterized protein from Mycobacterium bovis (strain ATCC BAA-935 / AF2122/97).